Reading from the N-terminus, the 213-residue chain is Tellurium resistance protein TerX (213 aa).

It belongs to the CAPAB/TerDEXZ family.

Functionally, not known; seems to contribute to the tellurium resistance (Ter) mechanism. Also involved in phage inhibition (Phi) and colicin resistance (PacB). The chain is Tellurium resistance protein TerX (terX) from Serratia marcescens.